The sequence spans 328 residues: Phenylalanine--tRNA ligase alpha subunit (328 aa).

Glutamate 245 serves as a coordination point for Mg(2+).

It belongs to the class-II aminoacyl-tRNA synthetase family. Phe-tRNA synthetase alpha subunit type 1 subfamily. Tetramer of two alpha and two beta subunits. Mg(2+) is required as a cofactor.

It is found in the cytoplasm. It catalyses the reaction tRNA(Phe) + L-phenylalanine + ATP = L-phenylalanyl-tRNA(Phe) + AMP + diphosphate + H(+). This chain is Phenylalanine--tRNA ligase alpha subunit, found in Helicobacter acinonychis (strain Sheeba).